The primary structure comprises 595 residues: MPVRQLPEIIVNRIAAGEVVERPASVVKELVENAIDAGSSRIDIFSDGGGRRKIVIADDGSGMTAADLALAVDRHATSKLDDEDLLQIRTLGFRGEALPSIGAVAKLSITTRHASEPHAWTLRVEGGDKTPIAPAALSQGTRVEVADLFFATPARLKFLKTDRTEAEAIREVVRRLAMARPDIAFTLAGEERAPVTWAAALPGAPGQLIRLGDILGADFRANAIEVRAEREGVVVEGFAASPALTKANALGQYLFVNGRPVRDKLILGAVRAAYSDYLPRDRHPVVALFVTLDSREVDANVHPAKTEVRFRNAGLVRALIVHALKDGLAREGRRTAANSAGSVISTFRPASMPPANWDWRASPSYPVGGSAAPSFAERAQAAFDVGAPSADIRPTEVTPDLLDRPLGAARTQIHETYIVSQTRDGLIVVDQHAAHERIVYERLKASLEANGVQRQILLIPDIVEMDEATVERLVARGEELAKFGLVIESFGPGAVAVRETPSLLGKTDAGGLLRDLAEHMAEWDEALPLERRLMHVAATMACHGSVRAGRVLKPEEMNALLREMEATPNSGQCNHGRPTYVELTLTDIEKLFGRR.

Belongs to the DNA mismatch repair MutL/HexB family.

Its function is as follows. This protein is involved in the repair of mismatches in DNA. It is required for dam-dependent methyl-directed DNA mismatch repair. May act as a 'molecular matchmaker', a protein that promotes the formation of a stable complex between two or more DNA-binding proteins in an ATP-dependent manner without itself being part of a final effector complex. The sequence is that of DNA mismatch repair protein MutL from Rhodopseudomonas palustris (strain TIE-1).